Consider the following 537-residue polypeptide: Phosphoenolpyruvate carboxykinase (ATP) (537 aa).

Substrate contacts are provided by Arg61, Tyr195, and Lys201. Residues Lys201, His220, and 236–244 contribute to the ATP site; that span reads GLSGTGKTT. Residues Lys201 and His220 each contribute to the Mn(2+) site. A Mn(2+)-binding site is contributed by Asp257. The ATP site is built by Glu285, Arg323, and Thr448. Arg323 provides a ligand contact to substrate.

Belongs to the phosphoenolpyruvate carboxykinase (ATP) family. The cofactor is Mn(2+).

It is found in the cytoplasm. It catalyses the reaction oxaloacetate + ATP = phosphoenolpyruvate + ADP + CO2. The protein operates within carbohydrate biosynthesis; gluconeogenesis. Involved in the gluconeogenesis. Catalyzes the conversion of oxaloacetate (OAA) to phosphoenolpyruvate (PEP) through direct phosphoryl transfer between the nucleoside triphosphate and OAA. The chain is Phosphoenolpyruvate carboxykinase (ATP) from Rhodopseudomonas palustris (strain ATCC BAA-98 / CGA009).